Consider the following 169-residue polypeptide: Alpha-S2-casein-like B (169 aa).

A signal peptide spans 1 to 15 (MKFIILTCLLAVALA).

It belongs to the alpha-casein family. In terms of tissue distribution, mammary gland specific. Secreted in milk.

It is found in the secreted. In terms of biological role, important role in the capacity of milk to transport calcium phosphate. This is Alpha-S2-casein-like B (Csn1s2b) from Rattus norvegicus (Rat).